Consider the following 208-residue polypeptide: Urease accessory protein UreG (208 aa).

12 to 19 (GPVGAGKT) serves as a coordination point for GTP.

Belongs to the SIMIBI class G3E GTPase family. UreG subfamily. In terms of assembly, homodimer. UreD, UreF and UreG form a complex that acts as a GTP-hydrolysis-dependent molecular chaperone, activating the urease apoprotein by helping to assemble the nickel containing metallocenter of UreC. The UreE protein probably delivers the nickel.

It is found in the cytoplasm. Its function is as follows. Facilitates the functional incorporation of the urease nickel metallocenter. This process requires GTP hydrolysis, probably effectuated by UreG. This chain is Urease accessory protein UreG, found in Rhodobacter capsulatus (Rhodopseudomonas capsulata).